The chain runs to 267 residues: GTP cyclohydrolase FolE2 (267 aa).

It belongs to the GTP cyclohydrolase IV family.

It carries out the reaction GTP + H2O = 7,8-dihydroneopterin 3'-triphosphate + formate + H(+). The protein operates within cofactor biosynthesis; 7,8-dihydroneopterin triphosphate biosynthesis; 7,8-dihydroneopterin triphosphate from GTP: step 1/1. In terms of biological role, converts GTP to 7,8-dihydroneopterin triphosphate. This Nitrosococcus oceani (strain ATCC 19707 / BCRC 17464 / JCM 30415 / NCIMB 11848 / C-107) protein is GTP cyclohydrolase FolE2.